The primary structure comprises 82 residues: Beta-defensin 119 (82 aa).

The signal sequence occupies residues 1-19 (MKFFLFFVILLAMEPVISG). Disulfide bonds link Cys-26–Cys-53, Cys-33–Cys-47, and Cys-37–Cys-54.

Belongs to the beta-defensin family.

Its subcellular location is the secreted. In terms of biological role, has antibacterial activity. The polypeptide is Beta-defensin 119 (DEFB119) (Canis lupus familiaris (Dog)).